The following is a 671-amino-acid chain: tRNA(Met) cytidine acetyltransferase TmcA (671 aa).

ATP contacts are provided by residues Gln180, 202–211, and Arg319; that span reads GRGKSALAGQ. The region spanning 349 to 531 is the N-acetyltransferase domain; that stretch reads IRFSAFTQAL…SGCYTAMALL (183 aa). Acetyl-CoA contacts are provided by residues 461-463, 468-474, Glu499, and Arg506; these read IAV and QREGIGQ.

Belongs to the RNA cytidine acetyltransferase family. TmcA subfamily.

It localises to the cytoplasm. It carries out the reaction cytidine(34) in elongator tRNA(Met) + acetyl-CoA + ATP + H2O = N(4)-acetylcytidine(34) in elongator tRNA(Met) + ADP + phosphate + CoA + H(+). Catalyzes the formation of N(4)-acetylcytidine (ac(4)C) at the wobble position of tRNA(Met), by using acetyl-CoA as an acetyl donor and ATP (or GTP). This chain is tRNA(Met) cytidine acetyltransferase TmcA, found in Citrobacter koseri (strain ATCC BAA-895 / CDC 4225-83 / SGSC4696).